The chain runs to 510 residues: ATP synthase subunit alpha (510 aa).

169-176 provides a ligand contact to ATP; the sequence is GDRQTGKT.

The protein belongs to the ATPase alpha/beta chains family. In terms of assembly, F-type ATPases have 2 components, CF(1) - the catalytic core - and CF(0) - the membrane proton channel. CF(1) has five subunits: alpha(3), beta(3), gamma(1), delta(1), epsilon(1). CF(0) has four main subunits: a(1), b(1), b'(1) and c(9-12).

The protein resides in the cell inner membrane. It carries out the reaction ATP + H2O + 4 H(+)(in) = ADP + phosphate + 5 H(+)(out). Produces ATP from ADP in the presence of a proton gradient across the membrane. The alpha chain is a regulatory subunit. The protein is ATP synthase subunit alpha of Rhodopseudomonas palustris (strain BisB5).